The sequence spans 116 residues: Large ribosomal subunit protein uL18 (116 aa).

It belongs to the universal ribosomal protein uL18 family. As to quaternary structure, part of the 50S ribosomal subunit; part of the 5S rRNA/L5/L18/L25 subcomplex. Contacts the 5S and 23S rRNAs.

This is one of the proteins that bind and probably mediate the attachment of the 5S RNA into the large ribosomal subunit, where it forms part of the central protuberance. The chain is Large ribosomal subunit protein uL18 from Pseudomonas putida (strain W619).